The primary structure comprises 639 residues: Alpha-dioxygenase 1 (639 aa).

Catalysis depends on histidine 163, which acts as the Proton acceptor. Residue aspartate 164 coordinates Ca(2+). Histidine 168 contributes to the heme b binding site. Ca(2+)-binding residues include threonine 216, tryptophan 218, aspartate 220, and serine 222. Positions 389, 486, and 490 each coordinate heme b.

This sequence belongs to the peroxidase family. Forms monomers in solution. It depends on heme b as a cofactor. Ca(2+) is required as a cofactor. Expressed in roots (epiderm), mature flowers (e.g. anthers) and senescing leaves.

The protein resides in the lipid droplet. The enzyme catalyses a 1,2-saturated fatty acid + O2 = a (2R)-2-hydroperoxy fatty acid. It catalyses the reaction (9Z,12Z,15Z)-octadecatrienoate + O2 = (R)-2-hydroperoxy-(9Z,12Z,15Z)-octadecatrienoate. The catalysed reaction is hexadecanoate + O2 = (2R)-2-hydroperoxyhexadecanoate. It carries out the reaction (9Z,12Z)-octadecadienoate + O2 = (2R,9Z,12Z)-2-hydroperoxyoctadecadienoate. The enzyme catalyses (9Z)-octadecenoate + O2 = (2R,9Z)-2-hydroperoxyoctadecenoate. Functionally, alpha-dioxygenase that catalyzes the primary oxygenation step of a variety of 14-20 carbon fatty acids, containing up to three unsaturated bonds, into their corresponding 2R-hydroperoxides. Involved in the production of oxylipins that function in cell signaling, wound healing, and protection from infection. Mediates protection against oxidative stress and cell death, probably by generating some lipid-derived molecules. Promotes local and systemic plant defense in a salicylic acid (SA)-dependent manner, including the establishment of systemic acquired resistance (SAR) in response to incompatible interaction. Involved in a negative regulation of abscisic acid (ABA)-mediated signaling pathway. This chain is Alpha-dioxygenase 1, found in Arabidopsis thaliana (Mouse-ear cress).